The sequence spans 726 residues: Kinesin-like protein KIN-10B (726 aa).

3 disordered regions span residues methionine 1–alanine 20, alanine 60–lysine 82, and lysine 402–arginine 423. The 345-residue stretch at glycine 15–valine 359 folds into the Kinesin motor domain. Residues phenylalanine 408–arginine 423 show a composition bias toward polar residues.

The protein belongs to the TRAFAC class myosin-kinesin ATPase superfamily. Kinesin family. KIN-10 subfamily.

In Oryza sativa subsp. japonica (Rice), this protein is Kinesin-like protein KIN-10B.